The following is a 482-amino-acid chain: tRNA sulfurtransferase (482 aa).

In terms of domain architecture, THUMP spans 61–165; that stretch reads LAIRDALTRI…DDRLLLIKGR (105 aa). ATP is bound by residues 183 to 184, K265, G287, and Q296; that span reads LI. C344 and C456 are joined by a disulfide. The Rhodanese domain maps to 404–482; sequence FGPNDVILDI…GFNNVKVYRP (79 aa). Catalysis depends on C456, which acts as the Cysteine persulfide intermediate.

It belongs to the ThiI family.

It is found in the cytoplasm. The enzyme catalyses [ThiI sulfur-carrier protein]-S-sulfanyl-L-cysteine + a uridine in tRNA + 2 reduced [2Fe-2S]-[ferredoxin] + ATP + H(+) = [ThiI sulfur-carrier protein]-L-cysteine + a 4-thiouridine in tRNA + 2 oxidized [2Fe-2S]-[ferredoxin] + AMP + diphosphate. The catalysed reaction is [ThiS sulfur-carrier protein]-C-terminal Gly-Gly-AMP + S-sulfanyl-L-cysteinyl-[cysteine desulfurase] + AH2 = [ThiS sulfur-carrier protein]-C-terminal-Gly-aminoethanethioate + L-cysteinyl-[cysteine desulfurase] + A + AMP + 2 H(+). It functions in the pathway cofactor biosynthesis; thiamine diphosphate biosynthesis. Catalyzes the ATP-dependent transfer of a sulfur to tRNA to produce 4-thiouridine in position 8 of tRNAs, which functions as a near-UV photosensor. Also catalyzes the transfer of sulfur to the sulfur carrier protein ThiS, forming ThiS-thiocarboxylate. This is a step in the synthesis of thiazole, in the thiamine biosynthesis pathway. The sulfur is donated as persulfide by IscS. The protein is tRNA sulfurtransferase of Escherichia coli O139:H28 (strain E24377A / ETEC).